We begin with the raw amino-acid sequence, 90 residues long: UPF0512 protein L (90 aa).

It belongs to the UPF0512 family.

The chain is UPF0512 protein L from Dictyostelium discoideum (Social amoeba).